Consider the following 29-residue polypeptide: Conotoxin SIVC (29 aa).

Position 1 is an N-acetylalanine; partial (alanine 1). 4-hydroxyproline is present on proline 2. Residues threonine 7 and threonine 9 are each glycosylated (O-linked (HexNAc...) threonine). 4-hydroxyproline is present on residues proline 18 and proline 22. At cysteine 29 the chain carries Cysteine amide.

This sequence belongs to the conotoxin A superfamily. O-linked glycans consist of Hex4-HexNAc2 hexasaccharides. Post-translationally, N-terminus is found to be free and N-acetylated, depending on the fraction studied. In terms of processing, contains 3 disulfide bonds. Expressed by the venom duct. Low expression in the distal venom duct sections.

Its subcellular location is the secreted. Probable neurotoxin with ion channel inhibitor activity. The protein is Conotoxin SIVC of Conus striatus (Striated cone).